The chain runs to 489 residues: MVFLIIALTLLATGARAASILAVLPTPAYSHHVVYRAYVHALVKNCHNVTVIKPQLLDYAVQDECGRVEQIDADMSAQQYKKLVASSGVFRKRGVVADETTVTADNYMGLIEMFKDQFDNANVRRFLSTNRTFDAVVVEAFADYALVFGHLFRPAPVIQIAPGYGLAENFERRRAVARHPLHYPTFGAAALTRRGGALSEWRLLNEFELLARRSDELLKQQFGKSTPTIRQLRDNVQLLLLNLHPVYDNNRPVPPSVQYLGGGLHLAQALPQRLDAPLERRLNESVDGAVYVSFGSGIDTNSIHAEFLQMLLDTFANLNNYTVLWKVDDAVAASVALPRNVLAQKWFSQTAVLRHKNVVAFVTQAGLQSSDEALQARVPMVCLPMMGDQFHHARKLQQFGVARALDTAAVSAPQLQLAIREVIADGEAYRARIDKLRAVVEHDAAPDEKAVKFTERVIKFNNDVNWPARSLKTTAANMAYSDYFVRFPL.

The signal sequence occupies residues 1–17 (MVFLIIALTLLATGARA).

The protein belongs to the UDP-glycosyltransferase family.

Its function is as follows. Catalyzes the transfer of glucose from UDP-glucose to ecdysteroids which are insect molting hormones. Expression of egt interferes with normal insect development and block molting. This chain is Ecdysteroid UDP-glucosyltransferase (EGT), found in Orgyia pseudotsugata (Douglas-fir tussock moth).